An 888-amino-acid polypeptide reads, in one-letter code: Inactive deaminase YJL070C (888 aa).

The segment at 1 to 42 is disordered; it reads MQAVERRPSLLFDEYQNSVTKPNETKNKEARVLSENDGDVSP. S9 is modified (phosphoserine). Positions 23 to 34 are enriched in basic and acidic residues; sequence NETKNKEARVLS. 3 positions are modified to phosphoserine: S41, S178, and S180.

Belongs to the metallo-dependent hydrolases superfamily. Adenosine and AMP deaminases family.

This is Inactive deaminase YJL070C from Saccharomyces cerevisiae (strain ATCC 204508 / S288c) (Baker's yeast).